We begin with the raw amino-acid sequence, 109 residues long: ATPase inhibitor, mitochondrial (109 aa).

The N-terminal 25 residues, 1–25, are a transit peptide targeting the mitochondrion; sequence MAATALAARTRQAVWSVWAMQGRGF. Residues 26 to 52 are disordered; it reads GSESGDNVRSSAGAVRDAGGAFGKREQ. The interval 26–52 is N-terminal inhibitory region; sequence GSESGDNVRSSAGAVRDAGGAFGKREQ. The stretch at 69–109 forms a coiled coil; it reads ALKKHHENEISHHAKEIERLQKEIERHKQSIKKLKQSEDDD. The interval 74-106 is antiparallel alpha-helical coiled coil region; it reads HENEISHHAKEIERLQKEIERHKQSIKKLKQSE. At K103 the chain carries N6-succinyllysine.

The protein belongs to the ATPase inhibitor family. Homodimer; represents the active form and is present at a pH value below 6.5. Homotetramer; represents the inactive form and is present at a pH value above 7.0.

It is found in the mitochondrion. Endogenous F(1)F(o)-ATPase inhibitor limiting ATP depletion when the mitochondrial membrane potential falls below a threshold and the F(1)F(o)-ATP synthase starts hydrolyzing ATP to pump protons out of the mitochondrial matrix. Required to avoid the consumption of cellular ATP when the F(1)F(o)-ATP synthase enzyme acts as an ATP hydrolase. Indirectly acts as a regulator of heme synthesis in erythroid tissues: regulates heme synthesis by modulating the mitochondrial pH and redox potential, allowing FECH to efficiently catalyze the incorporation of iron into protoporphyrin IX to produce heme. The protein is ATPase inhibitor, mitochondrial of Bos taurus (Bovine).